Consider the following 258-residue polypeptide: tRNA pseudouridine synthase A (258 aa).

Aspartate 52 (nucleophile) is an active-site residue. Tyrosine 111 is a substrate binding site.

This sequence belongs to the tRNA pseudouridine synthase TruA family. In terms of assembly, homodimer.

It carries out the reaction uridine(38/39/40) in tRNA = pseudouridine(38/39/40) in tRNA. Formation of pseudouridine at positions 38, 39 and 40 in the anticodon stem and loop of transfer RNAs. The sequence is that of tRNA pseudouridine synthase A from Azorhizobium caulinodans (strain ATCC 43989 / DSM 5975 / JCM 20966 / LMG 6465 / NBRC 14845 / NCIMB 13405 / ORS 571).